We begin with the raw amino-acid sequence, 236 residues long: Small ribosomal subunit protein uS2c (236 aa).

It belongs to the universal ribosomal protein uS2 family.

The protein localises to the plastid. Its subcellular location is the chloroplast. The sequence is that of Small ribosomal subunit protein uS2c (rps2) from Phaseolus vulgaris (Kidney bean).